The sequence spans 64 residues: MKAKEITALTTAEMLDKEKQYKEELFNLRFQQATGQLENTARLSQVRKNIARIKTVLRQQALNK.

It belongs to the universal ribosomal protein uL29 family.

This Lacticaseibacillus paracasei (strain ATCC 334 / BCRC 17002 / CCUG 31169 / CIP 107868 / KCTC 3260 / NRRL B-441) (Lactobacillus paracasei) protein is Large ribosomal subunit protein uL29.